The sequence spans 415 residues: uncharacterized protein (415 aa).

The TRAM domain occupies 1–52 (MQDLTINAIGAQGDGLARTADGKPAFVPLTLPGEVVRAKMDGARGEVVEILA). Positions 62, 68, 71, and 147 each coordinate [4Fe-4S] cluster. S-adenosyl-L-methionine is bound by residues Q252, Y279, E299, and D347. The active-site Nucleophile is the C373.

Belongs to the class I-like SAM-binding methyltransferase superfamily. RNA M5U methyltransferase family.

This is an uncharacterized protein from Caulobacter vibrioides (strain ATCC 19089 / CIP 103742 / CB 15) (Caulobacter crescentus).